A 732-amino-acid polypeptide reads, in one-letter code: Catalase-peroxidase (732 aa).

Residues 97–220 (WHSAGTYRTG…LAAVQMGLIY (124 aa)) constitute a cross-link (tryptophyl-tyrosyl-methioninium (Trp-Tyr) (with M-246)). H98 serves as the catalytic Proton acceptor. Residues 220-246 (YVNPEGPDGKPDPVAAGKDIRETFGRM) constitute a cross-link (tryptophyl-tyrosyl-methioninium (Tyr-Met) (with W-97)). Heme b is bound at residue H261.

The protein belongs to the peroxidase family. Peroxidase/catalase subfamily. In terms of assembly, homodimer or homotetramer. Heme b is required as a cofactor. In terms of processing, formation of the three residue Trp-Tyr-Met cross-link is important for the catalase, but not the peroxidase activity of the enzyme.

It carries out the reaction H2O2 + AH2 = A + 2 H2O. The enzyme catalyses 2 H2O2 = O2 + 2 H2O. Its function is as follows. Bifunctional enzyme with both catalase and broad-spectrum peroxidase activity. The sequence is that of Catalase-peroxidase from Chlorobium phaeobacteroides (strain BS1).